The sequence spans 108 residues: Nucleoid-associated protein CHAB381_0200 (108 aa).

It belongs to the YbaB/EbfC family. Homodimer.

It is found in the cytoplasm. The protein resides in the nucleoid. In terms of biological role, binds to DNA and alters its conformation. May be involved in regulation of gene expression, nucleoid organization and DNA protection. The sequence is that of Nucleoid-associated protein CHAB381_0200 from Campylobacter hominis (strain ATCC BAA-381 / DSM 21671 / CCUG 45161 / LMG 19568 / NCTC 13146 / CH001A).